Reading from the N-terminus, the 38-residue chain is Large ribosomal subunit protein bL36 (38 aa).

Belongs to the bacterial ribosomal protein bL36 family.

This is Large ribosomal subunit protein bL36 from Polynucleobacter necessarius subsp. necessarius (strain STIR1).